Here is a 516-residue protein sequence, read N- to C-terminus: BAR/IMD domain-containing adapter protein 2-like 2 (516 aa).

One can recognise an IMD domain in the interval 1 to 227 (MSGVNSDLLH…PTPLDQEAQL (227 aa)). Residues 200–273 (ADGWKEKVSE…SSSVGESLGL (74 aa)) form a disordered region. Positions 201–212 (DGWKEKVSESRS) are enriched in basic and acidic residues. A compositionally biased stretch (polar residues) spans 226–236 (QLKSSVGSLLQ). Basic and acidic residues predominate over residues 238-247 (GDREMDREPL). Residues 249 to 270 (RVPSRAPSPLPSRSRSSSVGES) are compositionally biased toward low complexity. Residues 274–337 (GGGRSMRAIV…PAAYVASTED (64 aa)) enclose the SH3 domain. The segment covering 355–376 (LLEPTSQSESDTQTYSEVSSPV) has biased composition (polar residues). The segment at 355-516 (LLEPTSQSES…TNDRSAPRIQ (162 aa)) is disordered. Residues 434-450 (PDRRAESHFESKVELKN) are compositionally biased toward basic and acidic residues. Residues 454-465 (LPPPAPPLPNSP) are compositionally biased toward pro residues.

Its subcellular location is the cell membrane. In terms of biological role, phosphoinositides-binding protein that induces the formation of planar or gently curved membrane structures. The chain is BAR/IMD domain-containing adapter protein 2-like 2 (baiap2l2) from Danio rerio (Zebrafish).